We begin with the raw amino-acid sequence, 157 residues long: Crossover junction endodeoxyribonuclease RuvC (157 aa).

Active-site residues include aspartate 7, glutamate 67, and aspartate 140. Residues aspartate 7, glutamate 67, and aspartate 140 each contribute to the Mg(2+) site.

Belongs to the RuvC family. In terms of assembly, homodimer which binds Holliday junction (HJ) DNA. The HJ becomes 2-fold symmetrical on binding to RuvC with unstacked arms; it has a different conformation from HJ DNA in complex with RuvA. In the full resolvosome a probable DNA-RuvA(4)-RuvB(12)-RuvC(2) complex forms which resolves the HJ. Mg(2+) serves as cofactor.

The protein localises to the cytoplasm. It catalyses the reaction Endonucleolytic cleavage at a junction such as a reciprocal single-stranded crossover between two homologous DNA duplexes (Holliday junction).. In terms of biological role, the RuvA-RuvB-RuvC complex processes Holliday junction (HJ) DNA during genetic recombination and DNA repair. Endonuclease that resolves HJ intermediates. Cleaves cruciform DNA by making single-stranded nicks across the HJ at symmetrical positions within the homologous arms, yielding a 5'-phosphate and a 3'-hydroxyl group; requires a central core of homology in the junction. The consensus cleavage sequence is 5'-(A/T)TT(C/G)-3'. Cleavage occurs on the 3'-side of the TT dinucleotide at the point of strand exchange. HJ branch migration catalyzed by RuvA-RuvB allows RuvC to scan DNA until it finds its consensus sequence, where it cleaves and resolves the cruciform DNA. The sequence is that of Crossover junction endodeoxyribonuclease RuvC from Rickettsia bellii (strain RML369-C).